The sequence spans 247 residues: Chromosome partition protein MukE (247 aa).

The disordered stretch occupies residues 213 to 247 (AQSLQEEKNGLKDNMDQSAVENEQYFENEENEGIA). Residues 217–227 (QEEKNGLKDNM) are compositionally biased toward basic and acidic residues. Over residues 236–247 (QYFENEENEGIA) the composition is skewed to acidic residues.

It belongs to the MukE family. As to quaternary structure, interacts, and probably forms a ternary complex, with MukF and MukB. The complex formation is stimulated by calcium or magnesium.

The protein resides in the cytoplasm. The protein localises to the nucleoid. Involved in chromosome condensation, segregation and cell cycle progression. May participate in facilitating chromosome segregation by condensation DNA from both sides of a centrally located replisome during cell division. Probably acts via its interaction with MukB and MukF. This Histophilus somni (strain 2336) (Haemophilus somnus) protein is Chromosome partition protein MukE.